Reading from the N-terminus, the 173-residue chain is Photosystem I assembly protein Ycf3 (173 aa).

TPR repeat units lie at residues 35–68, 72–105, and 120–153; these read AFVYYRDGMSAQAEGEYAEALEYYEEALTLEEDT, GYILYNMGLIYASNGDHDKALELYHQAIELNPRL, and GEKAKEDGDHDGGEALFDQAADYWIRAIRMAPNN.

This sequence belongs to the Ycf3 family.

The protein localises to the cellular thylakoid membrane. Functionally, essential for the assembly of the photosystem I (PSI) complex. May act as a chaperone-like factor to guide the assembly of the PSI subunits. The protein is Photosystem I assembly protein Ycf3 of Trichormus variabilis (strain ATCC 29413 / PCC 7937) (Anabaena variabilis).